Here is a 503-residue protein sequence, read N- to C-terminus: Legumin J (503 aa).

A signal peptide spans 1-22 (MSKPFLSLLSLSLLLFASACLA). Disulfide bonds link C33–C66 and C109–C329. The Cupin type-1 1 domain maps to 38–257 (INALEPDHRV…TFNTEEDTAK (220 aa)). Disordered stretches follow at residues 111–140 (ETYE…RRFR), 185–235 (FYLG…EGNS), and 253–323 (EDTA…RKNG). The span at 118–129 (SSQSRQESRQQQ) shows a compositional bias: low complexity. Composition is skewed to basic and acidic residues over residues 254–268 (DTAK…ERSQ) and 282–300 (KGKE…HREE). The segment covering 301 to 312 (KEEEEEEEEDEE) has biased composition (acidic residues). Positions 313–323 (EKQRSEERKNG) are enriched in basic and acidic residues. A Cupin type-1 2 domain is found at 335 to 482 (ENIADAARAD…AFGLRQRQVT (148 aa)).

This sequence belongs to the 11S seed storage protein (globulins) family. In terms of assembly, hexamer; each subunit is composed of an acidic and a basic chain derived from a single precursor and linked by a disulfide bond.

In terms of biological role, this protein found in the seeds of many leguminous and non-leguminous plants is the source of sulfur-containing amino acids in seed meals. The chain is Legumin J (LEGJ) from Pisum sativum (Garden pea).